A 114-amino-acid polypeptide reads, in one-letter code: UPF0145 protein TTHA1944 (114 aa).

This sequence belongs to the UPF0145 family.

This Thermus thermophilus (strain ATCC 27634 / DSM 579 / HB8) protein is UPF0145 protein TTHA1944.